The primary structure comprises 319 residues: Ribonuclease Z (319 aa).

Zn(2+) is bound by residues H62, H64, D66, H67, H145, D215, and H273. The Proton acceptor role is filled by D66.

The protein belongs to the RNase Z family. As to quaternary structure, homodimer. Requires Zn(2+) as cofactor.

It catalyses the reaction Endonucleolytic cleavage of RNA, removing extra 3' nucleotides from tRNA precursor, generating 3' termini of tRNAs. A 3'-hydroxy group is left at the tRNA terminus and a 5'-phosphoryl group is left at the trailer molecule.. Zinc phosphodiesterase, which displays some tRNA 3'-processing endonuclease activity. Probably involved in tRNA maturation, by removing a 3'-trailer from precursor tRNA. This Borrelia recurrentis (strain A1) protein is Ribonuclease Z.